The sequence spans 1180 residues: DNA-directed RNA polymerase subunit beta (1180 aa).

The segment covering 1154 to 1164 (EMKELDDEDEQ) has biased composition (acidic residues). Positions 1154–1180 (EMKELDDEDEQASDKLNLNIDSTESNV) are disordered. Polar residues predominate over residues 1167 to 1180 (DKLNLNIDSTESNV).

It belongs to the RNA polymerase beta chain family. In terms of assembly, the RNAP catalytic core consists of 2 alpha, 1 beta, 1 beta' and 1 omega subunit. When a sigma factor is associated with the core the holoenzyme is formed, which can initiate transcription.

It catalyses the reaction RNA(n) + a ribonucleoside 5'-triphosphate = RNA(n+1) + diphosphate. Functionally, DNA-dependent RNA polymerase catalyzes the transcription of DNA into RNA using the four ribonucleoside triphosphates as substrates. The sequence is that of DNA-directed RNA polymerase subunit beta from Halalkalibacterium halodurans (strain ATCC BAA-125 / DSM 18197 / FERM 7344 / JCM 9153 / C-125) (Bacillus halodurans).